Here is a 203-residue protein sequence, read N- to C-terminus: Protein GrpE (203 aa).

Basic and acidic residues predominate over residues 1–20 (MSSKEQNVHEEQVSKEKEGM). The disordered stretch occupies residues 1 to 38 (MSSKEQNVHEEQVSKEKEGMESVMNESQEQVKSEDAQA).

Belongs to the GrpE family. As to quaternary structure, homodimer.

It is found in the cytoplasm. Functionally, participates actively in the response to hyperosmotic and heat shock by preventing the aggregation of stress-denatured proteins, in association with DnaK and GrpE. It is the nucleotide exchange factor for DnaK and may function as a thermosensor. Unfolded proteins bind initially to DnaJ; upon interaction with the DnaJ-bound protein, DnaK hydrolyzes its bound ATP, resulting in the formation of a stable complex. GrpE releases ADP from DnaK; ATP binding to DnaK triggers the release of the substrate protein, thus completing the reaction cycle. Several rounds of ATP-dependent interactions between DnaJ, DnaK and GrpE are required for fully efficient folding. The protein is Protein GrpE of Proteus mirabilis (strain HI4320).